A 502-amino-acid chain; its full sequence is Lysine--tRNA ligase (502 aa).

Residues E398 and E405 each coordinate Mg(2+).

It belongs to the class-II aminoacyl-tRNA synthetase family. In terms of assembly, homodimer. Mg(2+) serves as cofactor.

The protein localises to the cytoplasm. It carries out the reaction tRNA(Lys) + L-lysine + ATP = L-lysyl-tRNA(Lys) + AMP + diphosphate. This is Lysine--tRNA ligase from Thermosipho africanus (strain TCF52B).